A 163-amino-acid polypeptide reads, in one-letter code: MSLLLLVVSALHILILVLLFVATLDKSWWTLPEKESLNLWYDCTWNTTAKTWACSNVSENGWLKAVQALMVLSLILCCLSFILFMIQLYTMRRGGLFYATGLCQLCTSAAVFSGALIYAIHAKEILAKHPSGGSFGYCFALAWVAFPLALVSGIIYIHLRKRE.

Residues 4-24 traverse the membrane as a helical segment; sequence LLLVVSALHILILVLLFVATL. Asn-46 and Asn-56 each carry an N-linked (GlcNAc...) asparagine glycan. The next 3 helical transmembrane spans lie at 66-86, 100-120, and 139-159; these read VQAL…LFMI, TGLC…IYAI, and FALA…YIHL.

This sequence belongs to the PMP-22/EMP/MP20 family.

It is found in the membrane. Probably involved in cell proliferation and cell-cell interactions. This is Epithelial membrane protein 3 (Emp3) from Rattus norvegicus (Rat).